The following is a 403-amino-acid chain: Arginine biosynthesis bifunctional protein ArgJ (403 aa).

Residues Thr-149, Lys-175, Thr-186, Glu-272, Asn-398, and Thr-403 each coordinate substrate. The active-site Nucleophile is the Thr-186.

The protein belongs to the ArgJ family. In terms of assembly, heterotetramer of two alpha and two beta chains.

The protein localises to the cytoplasm. It carries out the reaction N(2)-acetyl-L-ornithine + L-glutamate = N-acetyl-L-glutamate + L-ornithine. The enzyme catalyses L-glutamate + acetyl-CoA = N-acetyl-L-glutamate + CoA + H(+). The protein operates within amino-acid biosynthesis; L-arginine biosynthesis; L-ornithine and N-acetyl-L-glutamate from L-glutamate and N(2)-acetyl-L-ornithine (cyclic): step 1/1. Its pathway is amino-acid biosynthesis; L-arginine biosynthesis; N(2)-acetyl-L-ornithine from L-glutamate: step 1/4. Its function is as follows. Catalyzes two activities which are involved in the cyclic version of arginine biosynthesis: the synthesis of N-acetylglutamate from glutamate and acetyl-CoA as the acetyl donor, and of ornithine by transacetylation between N(2)-acetylornithine and glutamate. This is Arginine biosynthesis bifunctional protein ArgJ from Caldanaerobacter subterraneus subsp. tengcongensis (strain DSM 15242 / JCM 11007 / NBRC 100824 / MB4) (Thermoanaerobacter tengcongensis).